A 441-amino-acid chain; its full sequence is Acidic phosphoprotein (441 aa).

A signal peptide (or 24) is located at residues 1–15 (MKAISLGLISSIIFS). 2 N-linked (GlcNAc...) asparagine glycosylation sites follow: Asn21 and Asn112. Tandem repeats lie at residues 186-193 (EEDPYLLQ), 194-201 (EEDALSLM), 202-209 (EYDAETLN), 210-217 (EGDAETLN), 218-225 (EGDAETLN), 226-233 (EYDAGTLN), 234-241 (EEDAGTTN), 242-249 (EAGEGTTN), 250-257 (EEGEGAAN), 258-265 (EYDAETLN), 266-273 (EYDADTLN), 274-281 (EYDAGTLN), 282-289 (EYDAGTLN), 290-297 (EEEGSTTN), 298-305 (EAGEGTSN), 306-313 (EAGEGTAN), 353-360 (KGNENEGE), and 361-368 (QKGNENEG). A 16 X 8 AA tandem repeats region spans residues 186–313 (EEDPYLLQEE…SNEAGEGTAN (128 aa)). The tract at residues 232-416 (LNEEDAGTTN…EKEKKKEKKV (185 aa)) is disordered. Residues 238–247 (GTTNEAGEGT) show a composition bias toward low complexity. A compositionally biased stretch (acidic residues) spans 248 to 273 (TNEEGEGAANEYDAETLNEYDADTLN). A compositionally biased stretch (polar residues) spans 294 to 306 (STTNEAGEGTSNE). The span at 312-332 (ANDDEELDEEVASIFDDDEHA) shows a compositional bias: acidic residues. Basic and acidic residues predominate over residues 349–371 (ENVKKGNENEGEQKGNENEGEQK). The 2 X 9 AA tandem repeats stretch occupies residues 353–370 (KGNENEGEQKGNENEGEQ). The segment covering 372–415 (GKKKKAKEKSKKKVKNKPTMTTKKKKKKEKKKKKKEKEKKKEKK) has biased composition (basic residues).

It is found in the cell membrane. Its function is as follows. During infection, this phosphoprotein probably modulates the structure of the red cell membrane to the advantage of the parasite, although its precise function is not known. This chain is Acidic phosphoprotein (PCEMA1), found in Plasmodium chabaudi.